The sequence spans 1228 residues: DNA repair protein rad5 (1228 aa).

Disordered regions lie at residues 1-96 (MDRH…GTLT), 194-242 (PPVR…VLPS), 280-302 (QPPT…PRVS), and 445-474 (KAMD…QELE). Residues 34 to 43 (PSSSPQFSAP) show a composition bias toward low complexity. The span at 70–83 (HNDDDDDDDDDDDE) shows a compositional bias: acidic residues. Positions 211–237 (PKKSSTSQARSRSHAQAQPQPQSNTPT) are enriched in polar residues. Residues 445-454 (KAMDKAKAGD) are compositionally biased toward basic and acidic residues. A compositionally biased stretch (acidic residues) spans 465 to 474 (EEAEEGQELE). Residues 574–784 (PKQEQHCLGG…FSLVRFLRVE (211 aa)) enclose the Helicase ATP-binding domain. ATP is bound at residue 587–594 (DEMGLGKT). The short motif at 735–738 (DEAH) is the DEAH box element. The RING-type zinc-finger motif lies at 967–1012 (CPICAEEPMIDQAVTGCWHSACKKCLLDYIKHQTDRNEVPRCFQCR). The Helicase C-terminal domain occupies 1060–1216 (ALISHLRTLR…MMSDEEKKMQ (157 aa)).

This sequence belongs to the SNF2/RAD54 helicase family.

It is found in the cytoplasm. It localises to the nucleus. Probable helicase, member of the UBC2/RAD6 epistasis group. Functions with DNA repair protein uvs-2/rad18 in error-free postreplication DNA repair. Involved in the maintenance of wild-type rates of instability of simple repetitive sequences such as poly(GT) repeats. Seems to be involved in maintaining a balance which acts in favor of error-prone non-homologous joining during DNA double-strand breaks repairs. The chain is DNA repair protein rad5 (mus-41) from Neurospora crassa (strain ATCC 24698 / 74-OR23-1A / CBS 708.71 / DSM 1257 / FGSC 987).